A 160-amino-acid chain; its full sequence is Lipoprotein signal peptidase (160 aa).

Helical transmembrane passes span 5–25 (LVFF…KFII), 60–80 (IEWL…AFFI), and 84–104 (LPFL…AGTV). Active-site residues include aspartate 118 and aspartate 132. The chain crosses the membrane as a helical span at residues 128 to 148 (FNIADSCLTVGVIGLLLLYIV).

This sequence belongs to the peptidase A8 family.

It localises to the cell membrane. It carries out the reaction Release of signal peptides from bacterial membrane prolipoproteins. Hydrolyzes -Xaa-Yaa-Zaa-|-(S,diacylglyceryl)Cys-, in which Xaa is hydrophobic (preferably Leu), and Yaa (Ala or Ser) and Zaa (Gly or Ala) have small, neutral side chains.. It functions in the pathway protein modification; lipoprotein biosynthesis (signal peptide cleavage). This protein specifically catalyzes the removal of signal peptides from prolipoproteins. This Dehalococcoides mccartyi (strain ATCC BAA-2100 / JCM 16839 / KCTC 5957 / BAV1) protein is Lipoprotein signal peptidase.